Consider the following 118-residue polypeptide: Large ribosomal subunit protein bL20 (118 aa).

It belongs to the bacterial ribosomal protein bL20 family.

In terms of biological role, binds directly to 23S ribosomal RNA and is necessary for the in vitro assembly process of the 50S ribosomal subunit. It is not involved in the protein synthesizing functions of that subunit. The polypeptide is Large ribosomal subunit protein bL20 (Alteromonas mediterranea (strain DSM 17117 / CIP 110805 / LMG 28347 / Deep ecotype)).